The primary structure comprises 651 residues: Probable ATP-dependent helicase MJ0942 (651 aa).

The Helicase ATP-binding domain maps to 6–255 (YIKEKFPYPK…EIIEKYLTSR (250 aa)). 41–48 (APTGVGKT) contacts ATP. Residues Cys-102, Cys-149, and Cys-154 each coordinate [4Fe-4S] cluster. Positions 195-198 (DEAH) match the DEAH box motif. A Helicase C-terminal domain is found at 449–638 (NLLKILEAIN…NYEVMSLDMA (190 aa)).

Belongs to the helicase family. DinG subfamily. [4Fe-4S] cluster is required as a cofactor.

The catalysed reaction is Couples ATP hydrolysis with the unwinding of duplex DNA at the replication fork by translocating in the 5'-3' direction. This creates two antiparallel DNA single strands (ssDNA). The leading ssDNA polymer is the template for DNA polymerase III holoenzyme which synthesizes a continuous strand.. The enzyme catalyses ATP + H2O = ADP + phosphate + H(+). Functionally, might be a 5'-3' DNA helicase. In Methanocaldococcus jannaschii (strain ATCC 43067 / DSM 2661 / JAL-1 / JCM 10045 / NBRC 100440) (Methanococcus jannaschii), this protein is Probable ATP-dependent helicase MJ0942.